The primary structure comprises 356 residues: Phosphate acyltransferase (356 aa).

The protein belongs to the PlsX family. In terms of assembly, homodimer. Probably interacts with PlsY.

It localises to the cytoplasm. The enzyme catalyses a fatty acyl-[ACP] + phosphate = an acyl phosphate + holo-[ACP]. It participates in lipid metabolism; phospholipid metabolism. Its function is as follows. Catalyzes the reversible formation of acyl-phosphate (acyl-PO(4)) from acyl-[acyl-carrier-protein] (acyl-ACP). This enzyme utilizes acyl-ACP as fatty acyl donor, but not acyl-CoA. This is Phosphate acyltransferase from Bartonella bacilliformis (strain ATCC 35685 / KC583 / Herrer 020/F12,63).